The following is a 361-amino-acid chain: Fructose-1,6-bisphosphatase class 1 2 (361 aa).

Mg(2+) contacts are provided by Glu110, Asp134, Leu136, and Asp137. Substrate contacts are provided by residues 137–140, Asn231, Tyr264, and Lys294; that span reads DGSS. Glu300 provides a ligand contact to Mg(2+).

It belongs to the FBPase class 1 family. Homotetramer. The cofactor is Mg(2+).

Its subcellular location is the cytoplasm. It carries out the reaction beta-D-fructose 1,6-bisphosphate + H2O = beta-D-fructose 6-phosphate + phosphate. Its pathway is carbohydrate biosynthesis; gluconeogenesis. The sequence is that of Fructose-1,6-bisphosphatase class 1 2 from Salinibacter ruber (strain DSM 13855 / M31).